The chain runs to 365 residues: Galactoside alpha-(1,2)-fucosyltransferase 1 (365 aa).

Over 1 to 8 the chain is Cytoplasmic; that stretch reads MWPLSHRH. A helical; Signal-anchor for type II membrane protein membrane pass occupies residues 9 to 25; it reads LCLAFLLVCVLSAISFF. The Lumenal portion of the chain corresponds to 26–365; the sequence is LHLYQDSIRH…LSPLWTLAEP (340 aa). N-linked (GlcNAc...) asparagine glycosylation is found at N65, N301, and N327.

This sequence belongs to the glycosyltransferase 11 family.

Its subcellular location is the golgi apparatus. It is found in the golgi stack membrane. It catalyses the reaction a beta-D-galactosyl-(1-&gt;4)-N-acetyl-beta-D-glucosaminyl derivative + GDP-beta-L-fucose = an alpha-L-Fuc-(1-&gt;2)-beta-D-Gal-(1-&gt;4)-beta-D-GlcNAc derivative + GDP + H(+). The enzyme catalyses a ganglioside GA1 + GDP-beta-L-fucose = a ganglioside Fuc-GA1 + GDP + H(+). It carries out the reaction a beta-D-Gal-(1-&gt;3)-beta-D-GlcNAc-(1-&gt;3)-beta-D-Gal-(1-&gt;4)-beta-D-Glc-(1&lt;-&gt;1')-Cer(d18:1(4E)) + GDP-beta-L-fucose = alpha-L-fucosyl-(1-&gt;2)- beta-D-galactosyl-(1-&gt;3)-N-acetyl-beta-D-glucosaminyl-(1-&gt;3)-beta-D-galactosyl-(1-&gt;4)-beta-D-glucosyl-(1&lt;-&gt;1')-N-acylsphing-4-enine + GDP + H(+). The catalysed reaction is a neolactoside nLc4Cer(d18:1(4E)) + GDP-beta-L-fucose = a neolactoside IV(2)-alpha-Fuc-nLc4Cer(d18:1(4E)) + GDP + H(+). It catalyses the reaction a ganglioside GM1 + GDP-beta-L-fucose = a ganglioside Fuc-GM1 + GDP + H(+). The enzyme catalyses beta-D-galactosyl-(1-&gt;3)-N-acetyl-D-galactosamine + GDP-beta-L-fucose = alpha-L-fucosyl-(1-&gt;2)-beta-D-galactosyl-(1-&gt;3)-N-acetyl-D-galactosamine + GDP + H(+). Its pathway is protein modification; protein glycosylation. Functionally, catalyzes the transfer of L-fucose, from a guanosine diphosphate-beta-L-fucose, to the terminal galactose residue of glycoconjugates through an alpha(1,2) linkage leading to H antigen synthesis that is an intermediate substrate in the synthesis of ABO blood group antigens. H antigen is essential for maturation of the glomerular layer of the main olfactory bulb, in cell migration and early cell-cell contacts during tumor associated angiogenesis. Preferentially fucosylates soluble lactose and to a lesser extent fucosylates glycolipids gangliosides GA1 and GM1a. This is Galactoside alpha-(1,2)-fucosyltransferase 1 from Leontopithecus chrysomelas (Golden-headed lion tamarin).